A 99-amino-acid polypeptide reads, in one-letter code: Integration host factor subunit alpha (99 aa).

A disordered region spans residues 49–73 (FGNFDLRDKNQRPGRNPKTGEDIPI).

The protein belongs to the bacterial histone-like protein family. Heterodimer of an alpha and a beta chain.

Its function is as follows. This protein is one of the two subunits of integration host factor, a specific DNA-binding protein that functions in genetic recombination as well as in transcriptional and translational control. The protein is Integration host factor subunit alpha of Shigella boydii serotype 18 (strain CDC 3083-94 / BS512).